A 508-amino-acid polypeptide reads, in one-letter code: Maturase K (508 aa).

Belongs to the intron maturase 2 family. MatK subfamily.

It localises to the plastid. The protein localises to the chloroplast. Usually encoded in the trnK tRNA gene intron. Probably assists in splicing its own and other chloroplast group II introns. This is Maturase K from Collinsia heterophylla (Purple Chinese houses).